We begin with the raw amino-acid sequence, 521 residues long: Acetylcholine receptor subunit delta (521 aa).

The signal sequence occupies residues M1–S21. At E22–K247 the chain is on the extracellular side. Residues N53 and N164 are each glycosylated (N-linked (GlcNAc...) asparagine). The cysteines at positions 151 and 165 are disulfide-linked. Helical transmembrane passes span P248–L272, M280–I297, and Y314–L335. Topologically, residues H336 to R475 are cytoplasmic. Y394 bears the Phosphotyrosine; by Tyr-kinases mark. Residues L476–L494 traverse the membrane as a helical segment.

It belongs to the ligand-gated ion channel (TC 1.A.9) family. Acetylcholine receptor (TC 1.A.9.1) subfamily. In terms of assembly, pentamer of two alpha chains, and one each of the beta, delta, and gamma (in immature muscle) or epsilon (in mature muscle) chains.

The protein localises to the postsynaptic cell membrane. It is found in the cell membrane. The enzyme catalyses K(+)(in) = K(+)(out). It catalyses the reaction Na(+)(in) = Na(+)(out). Its function is as follows. After binding acetylcholine, the AChR responds by an extensive change in conformation that affects all subunits and leads to opening of an ion-conducting channel across the plasma membrane. In Xenopus laevis (African clawed frog), this protein is Acetylcholine receptor subunit delta (chrnd).